Here is a 270-residue protein sequence, read N- to C-terminus: Co-chaperone protein DjlA (270 aa).

Topologically, residues Met-1–Lys-6 are periplasmic. A helical membrane pass occupies residues Leu-7–His-30. At Val-31–Val-270 the chain is on the cytoplasmic side. Residues Asp-204–Val-270 enclose the J domain.

Homodimer.

It is found in the cell inner membrane. Regulatory DnaK co-chaperone. Direct interaction between DnaK and DjlA is needed for the induction of the wcaABCDE operon, involved in the synthesis of a colanic acid polysaccharide capsule, possibly through activation of the RcsB/RcsC phosphotransfer signaling pathway. The colanic acid capsule may help the bacterium survive conditions outside the host. This is Co-chaperone protein DjlA from Coxiella burnetii (strain RSA 493 / Nine Mile phase I).